Here is a 346-residue protein sequence, read N- to C-terminus: Methylthioribose-1-phosphate isomerase (346 aa).

Substrate-binding positions include 48 to 50 (RGA), R91, and Q200. The active-site Proton donor is D241. 251–252 (NK) is a binding site for substrate.

The protein belongs to the eIF-2B alpha/beta/delta subunits family. MtnA subfamily.

The catalysed reaction is 5-(methylsulfanyl)-alpha-D-ribose 1-phosphate = 5-(methylsulfanyl)-D-ribulose 1-phosphate. The protein operates within amino-acid biosynthesis; L-methionine biosynthesis via salvage pathway; L-methionine from S-methyl-5-thio-alpha-D-ribose 1-phosphate: step 1/6. Catalyzes the interconversion of methylthioribose-1-phosphate (MTR-1-P) into methylthioribulose-1-phosphate (MTRu-1-P). This Picosynechococcus sp. (strain ATCC 27264 / PCC 7002 / PR-6) (Agmenellum quadruplicatum) protein is Methylthioribose-1-phosphate isomerase.